The chain runs to 410 residues: Mitochondrial potassium channel (410 aa).

The transit peptide at 1-35 (MTGCSPVFTMQQVVGVSHRLVWRTFRGTDLLMTRT) directs the protein to the mitochondrion. Residues 36–201 (LCSPGPSRPG…KERTRAERTK (166 aa)) are Mitochondrial matrix-facing. A coiled-coil region spans residues 116–143 (VREAREDLEAQQTKLKEVRDRLDRVSRE). A helical membrane pass occupies residues 202-222 (NWSLIGSVLGALIGVAGSTYV). Over 223 to 385 (NRVRLQELKA…RLEAQANRNA (163 aa)) the chain is Mitochondrial intermembrane. The tract at residues 276–296 (GQDQGSGSPTGPSSPRGKDID) is disordered. A compositionally biased stretch (low complexity) spans 280–290 (GSGSPTGPSSP). The chain crosses the membrane as a helical span at residues 386-406 (ISSTLVTCVTFMATLPLLYML). Over 407-410 (FKTS) the chain is Mitochondrial matrix.

As to quaternary structure, the mitochondrial potassium channel (mitoK(ATP)) forms a heteromultimer.

Its subcellular location is the mitochondrion inner membrane. It carries out the reaction K(+)(in) = K(+)(out). Channel activity inhibited by ATP via ABCB8/MITOSUR subunit. Pore-forming subunit of the mitochondrial ATP-gated potassium channel (mitoK(ATP)). Together with ATP-binding subunit ABCB8/MITOSUR of the mitoK(ATP) channel, mediates ATP-dependent K(+) currents across the mitochondrial inner membrane. An increase in ATP intracellular levels closes the channel, inhibiting K(+) transport, whereas a decrease in ATP levels enhances K(+) uptake in the mitochondrial matrix. May contribute to the homeostatic control of cellular metabolism under stress conditions by regulating the mitochondrial matrix volume. The protein is Mitochondrial potassium channel of Rattus norvegicus (Rat).